We begin with the raw amino-acid sequence, 106 residues long: Large ribosomal subunit protein eL30 (106 aa).

This sequence belongs to the eukaryotic ribosomal protein eL30 family.

The polypeptide is Large ribosomal subunit protein eL30 (rpl30e) (Sulfurisphaera tokodaii (strain DSM 16993 / JCM 10545 / NBRC 100140 / 7) (Sulfolobus tokodaii)).